Here is a 536-residue protein sequence, read N- to C-terminus: Probable cytochrome P450 318a1 (536 aa).

Residues 439-457 (EEEQLSKGHNDSGSGEKRR) are compositionally biased toward basic and acidic residues. Residues 439 to 460 (EEEQLSKGHNDSGSGEKRRQRD) are disordered. Cysteine 477 serves as a coordination point for heme.

It belongs to the cytochrome P450 family. Requires heme as cofactor.

It is found in the endoplasmic reticulum membrane. It localises to the microsome membrane. May be involved in the metabolism of insect hormones and in the breakdown of synthetic insecticides. In Drosophila melanogaster (Fruit fly), this protein is Probable cytochrome P450 318a1 (Cyp318a1).